Consider the following 235-residue polypeptide: Glycerol-3-phosphate acyltransferase (235 aa).

A run of 6 helical transmembrane segments spans residues 4–24, 56–76, 94–114, 125–145, 152–172, and 191–211; these read LLAI…IMAG, SVTL…VAFF, LLAG…GFKG, LIGI…LTVW, VASI…KYVF, and FHDS…LAIL.

The protein belongs to the PlsY family. Probably interacts with PlsX.

It localises to the cell inner membrane. The catalysed reaction is an acyl phosphate + sn-glycerol 3-phosphate = a 1-acyl-sn-glycero-3-phosphate + phosphate. It functions in the pathway lipid metabolism; phospholipid metabolism. Functionally, catalyzes the transfer of an acyl group from acyl-phosphate (acyl-PO(4)) to glycerol-3-phosphate (G3P) to form lysophosphatidic acid (LPA). This enzyme utilizes acyl-phosphate as fatty acyl donor, but not acyl-CoA or acyl-ACP. The chain is Glycerol-3-phosphate acyltransferase from Chlorobium luteolum (strain DSM 273 / BCRC 81028 / 2530) (Pelodictyon luteolum).